Here is a 238-residue protein sequence, read N- to C-terminus: uncharacterized protein (238 aa).

2 disordered regions span residues 1 to 51 (MPCT…ASCA) and 214 to 238 (ITVEPAGGSAEPTSDPVALMNFPTA). A compositionally biased stretch (low complexity) spans 16–31 (ATWRTARPAPRRCGSC).

This is an uncharacterized protein from Streptomyces griseus.